The primary structure comprises 504 residues: Ribosomal protein uS12 methylthiotransferase RimO (504 aa).

An MTTase N-terminal domain is found at 19-135; the sequence is KKVGFVSLGC…ILAASGIEPR (117 aa). [4Fe-4S] cluster is bound by residues Cys-28, Cys-64, Cys-98, Cys-214, Cys-218, and Cys-221. The Radical SAM core domain maps to 200–430; it reads ATPKYMAYIK…MSLQKQISKK (231 aa). Positions 433 to 504 constitute a TRAM domain; sequence KALIGREFDV…HDYDLVARLL (72 aa).

Belongs to the methylthiotransferase family. RimO subfamily. Requires [4Fe-4S] cluster as cofactor.

It localises to the cytoplasm. It catalyses the reaction L-aspartate(89)-[ribosomal protein uS12]-hydrogen + (sulfur carrier)-SH + AH2 + 2 S-adenosyl-L-methionine = 3-methylsulfanyl-L-aspartate(89)-[ribosomal protein uS12]-hydrogen + (sulfur carrier)-H + 5'-deoxyadenosine + L-methionine + A + S-adenosyl-L-homocysteine + 2 H(+). Its function is as follows. Catalyzes the methylthiolation of an aspartic acid residue of ribosomal protein uS12. In Koribacter versatilis (strain Ellin345), this protein is Ribosomal protein uS12 methylthiotransferase RimO.